The following is a 621-amino-acid chain: Kininogen-1 (621 aa).

The signal sequence occupies residues 1–18; that stretch reads MKLITILFLCSRLLPSLT. The region spanning 27–131 is the Cystatin kininogen-type 1 domain; it reads CNDQDVFKAV…IQTCLITPAE (105 aa). Disulfide bonds link Cys27–Cys591, Cys82–Cys93, Cys106–Cys125, Cys141–Cys144, Cys205–Cys217, Cys228–Cys247, Cys263–Cys266, Cys327–Cys339, and Cys350–Cys369. N-linked (GlcNAc...) asparagine glycans are attached at residues Asn47 and Asn87. An O-linked (GalNAc...) threonine; partial glycan is attached at Thr136. The Cystatin kininogen-type 2 domain occupies 150–253; it reads TKSPDLEPVL…SQKCDLYPVK (104 aa). 2 N-linked (GlcNAc...) asparagine glycosylation sites follow: Asn168 and Asn169. An N-linked (GlcNAc...) asparagine; partial glycan is attached at Asn197. Asn204 carries N-linked (GlcNAc...) asparagine glycosylation. The Cystatin kininogen-type 3 domain maps to 272-375; that stretch reads VDSPDLEEPL…TVNCQPLGQT (104 aa). Ser331 carries the phosphoserine modification. The interval 396–497 is disordered; that stretch reads EGSTTVSLPH…GKNNGKHYDW (102 aa). O-linked (GalNAc...) serine glycosylation occurs at Ser398. O-linked (GalNAc...) threonine glycans are attached at residues Thr399 and Thr400. Residue Ser406 is glycosylated (O-linked (GalNAc...) serine). The segment covering 444–492 has biased composition (basic residues); sequence GHKHKHDQGHGHHGSHGLGHGHQKQHGLGHGHKHGHGHGKHKNKGKNNG. The O-linked (GalNAc...) serine glycan is linked to Ser512. 6 O-linked (GalNAc...) threonine glycosylation sites follow: Thr520, Thr524, Thr536, Thr548, Thr553, and Thr570. The O-linked (GalNAc...) serine glycan is linked to Ser581.

Post-translationally, bradykinin is released from kininogen by plasma kallikrein. In terms of processing, phosphorylated by FAM20C in the extracellular medium. Bradykinin is inactivated by ACE, which removes the dipeptide Arg-Phe from its C-terminus. In terms of tissue distribution, plasma.

Its subcellular location is the secreted. The protein resides in the extracellular space. In terms of biological role, kininogens are inhibitors of thiol proteases. HMW-kininogen plays an important role in blood coagulation by helping to position optimally prekallikrein and factor XI next to factor XII; HMW-kininogen inhibits the thrombin- and plasmin-induced aggregation of thrombocytes. LMW-kininogen inhibits the aggregation of thrombocytes. LMW-kininogen is in contrast to HMW-kininogen not involved in blood clotting. The active peptide bradykinin is a potent vasodilatator that is released from HMW-kininogen shows a variety of physiological effects: (A) influence in smooth muscle contraction, (B) induction of hypotension, (C) natriuresis and diuresis, (D) decrease in blood glucose level, (E) it is a mediator of inflammation and causes (E1) increase in vascular permeability, (E2) stimulation of nociceptors (4E3) release of other mediators of inflammation (e.g. prostaglandins), (F) it has a cardioprotective effect (directly via bradykinin action, indirectly via endothelium-derived relaxing factor action). The chain is Kininogen-1 (KNG1) from Bos taurus (Bovine).